The sequence spans 132 residues: Small ribosomal subunit protein uS8 (132 aa).

The protein belongs to the universal ribosomal protein uS8 family. In terms of assembly, part of the 30S ribosomal subunit. Contacts proteins S5 and S12.

Functionally, one of the primary rRNA binding proteins, it binds directly to 16S rRNA central domain where it helps coordinate assembly of the platform of the 30S subunit. The protein is Small ribosomal subunit protein uS8 of Bacillus licheniformis (strain ATCC 14580 / DSM 13 / JCM 2505 / CCUG 7422 / NBRC 12200 / NCIMB 9375 / NCTC 10341 / NRRL NRS-1264 / Gibson 46).